Reading from the N-terminus, the 75-residue chain is ATP synthase subunit c (75 aa).

2 helical membrane-spanning segments follow: residues 4 to 24 (GLIA…GLGQ) and 54 to 74 (AVAE…MFAF).

Belongs to the ATPase C chain family. F-type ATPases have 2 components, F(1) - the catalytic core - and F(0) - the membrane proton channel. F(1) has five subunits: alpha(3), beta(3), gamma(1), delta(1), epsilon(1). F(0) has three main subunits: a(1), b(2) and c(10-14). The alpha and beta chains form an alternating ring which encloses part of the gamma chain. F(1) is attached to F(0) by a central stalk formed by the gamma and epsilon chains, while a peripheral stalk is formed by the delta and b chains.

The protein resides in the cell membrane. Its function is as follows. F(1)F(0) ATP synthase produces ATP from ADP in the presence of a proton or sodium gradient. F-type ATPases consist of two structural domains, F(1) containing the extramembraneous catalytic core and F(0) containing the membrane proton channel, linked together by a central stalk and a peripheral stalk. During catalysis, ATP synthesis in the catalytic domain of F(1) is coupled via a rotary mechanism of the central stalk subunits to proton translocation. In terms of biological role, key component of the F(0) channel; it plays a direct role in translocation across the membrane. A homomeric c-ring of between 10-14 subunits forms the central stalk rotor element with the F(1) delta and epsilon subunits. This is ATP synthase subunit c from Mycoplasmopsis agalactiae (strain NCTC 10123 / CIP 59.7 / PG2) (Mycoplasma agalactiae).